The chain runs to 303 residues: Mitochondrial substrate carrier family protein E (303 aa).

The Mitochondrial intermembrane segment spans residues 1 to 8 (MENKKESS). Solcar repeat units follow at residues 6–93 (ESSL…SKQW), 104–197 (ESTI…CKST), and 210–298 (LPIP…LKYL). A helical membrane pass occupies residues 9-29 (LLYILTGATSGLLADSIMHPV). At 30–67 (DTVRARVQIEKVGKSQYKGTFNALNQIIKNEGVSYLYK) the chain is on the mitochondrial matrix side. The helical transmembrane segment at 68–88 (GFPIVATATVPAHALYFLGYE) threads the bilayer. Over 89 to 109 (YSKQWVTDRYGKKWGESTITH) the chain is Mitochondrial intermembrane. Residues 110–130 (FSAGFVADALGSLIWVPMDII) form a helical membrane-spanning segment. At 131 to 171 (KQRLQVQTNTQKLNPNQTYYKGSFHAGKIILQEEGIRGLYR) the chain is on the mitochondrial matrix side. Residues 172–192 (GFMPALATYGPFVGIYFSVYE) traverse the membrane as a helical segment. Over 193-215 (KCKSTISSLLSKEKDQYLPIPYQ) the chain is Mitochondrial intermembrane. A helical transmembrane segment spans residues 216-236 (LGSGFFAGAFAAAVTCPLDVI). Over 237–268 (KTRIQVQRSTEKQIYKGMWDSFKTILKEEGPK) the chain is Mitochondrial matrix. A helical transmembrane segment spans residues 269–289 (AFVKGMGARIWWIAPGNALTI). Residues 290 to 303 (ASYEQLKYLFKDLI) lie on the Mitochondrial intermembrane side of the membrane.

It belongs to the mitochondrial carrier (TC 2.A.29) family.

The protein localises to the mitochondrion inner membrane. Its function is as follows. Mitochondrial solute carriers shuttle metabolites, nucleotides, and cofactors through the mitochondrial inner membrane. The polypeptide is Mitochondrial substrate carrier family protein E (mcfE) (Dictyostelium discoideum (Social amoeba)).